Consider the following 285-residue polypeptide: mRNA decay factor CTH2 (285 aa).

A required for mRNA decay activity region spans residues 37–55; the sequence is INIRELEEYYNKTILNEDN. Residues 132–164 are disordered; it reads LQQLSQQKPKNDASFSSEKESSAQPKVKSQVQE. Residues 153 to 164 show a composition bias toward polar residues; sequence SAQPKVKSQVQE. 2 C3H1-type zinc fingers span residues 169 to 197 and 207 to 235; these read LYKTELCESFTLKGSCPYGSKCQFAHGLG and NFRTKPCVNWEKLGYCPYGRRCCFKHGDD. Residues 252 to 271 are disordered; that stretch reads STSKQSDEKRSNGRGSAKKK.

As to quaternary structure, interacts with DHH1.

The protein resides in the nucleus. It localises to the cytoplasm. It is found in the P-body. Binds to specific AU-rich elements (ARE) in the 3'-untranslated region of target mRNAs and promotes their degradation. In response to iron deficiency, promotes the decay of many mRNAs encoding proteins involved in iron-dependent pathways. Recruits the DHH1 helicase to the SDH4 mRNA and promotes SDH4 mRNA decay. Also destabilizes target mRNA by modulating 3'-end processing, creating extended transcripts that are prone for degradation. In Saccharomyces cerevisiae (strain ATCC 204508 / S288c) (Baker's yeast), this protein is mRNA decay factor CTH2 (TIS11).